The chain runs to 416 residues: UDP-N-acetylglucosamine 1-carboxyvinyltransferase (416 aa).

22-23 provides a ligand contact to phosphoenolpyruvate; the sequence is KN. UDP-N-acetyl-alpha-D-glucosamine is bound at residue Arg92. Cys116 functions as the Proton donor in the catalytic mechanism. Residue Cys116 is modified to 2-(S-cysteinyl)pyruvic acid O-phosphothioketal. UDP-N-acetyl-alpha-D-glucosamine contacts are provided by residues 121–125, Asp304, and Ile326; that span reads RPVDQ.

This sequence belongs to the EPSP synthase family. MurA subfamily.

It is found in the cytoplasm. The catalysed reaction is phosphoenolpyruvate + UDP-N-acetyl-alpha-D-glucosamine = UDP-N-acetyl-3-O-(1-carboxyvinyl)-alpha-D-glucosamine + phosphate. It participates in cell wall biogenesis; peptidoglycan biosynthesis. In terms of biological role, cell wall formation. Adds enolpyruvyl to UDP-N-acetylglucosamine. This Janthinobacterium sp. (strain Marseille) (Minibacterium massiliensis) protein is UDP-N-acetylglucosamine 1-carboxyvinyltransferase.